The chain runs to 119 residues: NADH-quinone oxidoreductase subunit A (119 aa).

The next 3 membrane-spanning stretches (helical) occupy residues 7-27, 63-83, and 88-108; these read FPVL…VSIG, LVAI…PWGV, and IGWP…LGFA.

This sequence belongs to the complex I subunit 3 family. NDH-1 is composed of 14 different subunits. Subunits NuoA, H, J, K, L, M, N constitute the membrane sector of the complex.

The protein resides in the cell inner membrane. The catalysed reaction is a quinone + NADH + 5 H(+)(in) = a quinol + NAD(+) + 4 H(+)(out). NDH-1 shuttles electrons from NADH, via FMN and iron-sulfur (Fe-S) centers, to quinones in the respiratory chain. The immediate electron acceptor for the enzyme in this species is believed to be ubiquinone. Couples the redox reaction to proton translocation (for every two electrons transferred, four hydrogen ions are translocated across the cytoplasmic membrane), and thus conserves the redox energy in a proton gradient. The polypeptide is NADH-quinone oxidoreductase subunit A (Paraburkholderia xenovorans (strain LB400)).